Here is a 714-residue protein sequence, read N- to C-terminus: Cadherin-13 (714 aa).

The signal sequence occupies residues Met-1–Ala-22. A propeptide spanning residues Asp-23–Arg-138 is cleaved from the precursor. Cadherin domains follow at residues Ser-143–Phe-245, Arg-246–Phe-363, Thr-364–Phe-477, Tyr-478–Ile-585, and Tyr-586–Cys-680. The tract at residues Pro-156–Asp-183 is disordered. Residues Asp-158–Lys-172 show a composition bias toward basic and acidic residues. Residues Asn-382, Asn-489, Asn-500, Asn-530, Asn-598, Asn-638, and Asn-671 are each glycosylated (N-linked (GlcNAc...) asparagine). Gly-693 is lipidated: GPI-anchor amidated glycine. The propeptide at Ala-694–Leu-714 is removed in mature form.

By contrast to classical cadherins, homodimerization in trans is not mediated by cadherin EC1 domain strand-swapping, but instead through a homophilic adhesive interface which joins two elongated EC1-EC2 domains through a region near their Ca2+-binding sites to form a tetrahedral, X-like shape.

Its subcellular location is the cell membrane. It localises to the cytoplasm. Cadherins are calcium-dependent cell adhesion proteins. They preferentially interact with themselves in a homophilic manner in connecting cells; cadherins may thus contribute to the sorting of heterogeneous cell types. May act as a negative regulator of neural cell growth. In Mus musculus (Mouse), this protein is Cadherin-13 (Cdh13).